The sequence spans 138 residues: Putative pre-16S rRNA nuclease (138 aa).

Belongs to the YqgF nuclease family.

It localises to the cytoplasm. Its function is as follows. Could be a nuclease involved in processing of the 5'-end of pre-16S rRNA. The polypeptide is Putative pre-16S rRNA nuclease (Helicobacter hepaticus (strain ATCC 51449 / 3B1)).